The chain runs to 251 residues: 1-(5-phosphoribosyl)-5-[(5-phosphoribosylamino)methylideneamino] imidazole-4-carboxamide isomerase (251 aa).

The Proton acceptor role is filled by aspartate 7. Aspartate 131 serves as the catalytic Proton donor.

It belongs to the HisA/HisF family.

The protein resides in the cytoplasm. It catalyses the reaction 1-(5-phospho-beta-D-ribosyl)-5-[(5-phospho-beta-D-ribosylamino)methylideneamino]imidazole-4-carboxamide = 5-[(5-phospho-1-deoxy-D-ribulos-1-ylimino)methylamino]-1-(5-phospho-beta-D-ribosyl)imidazole-4-carboxamide. Its pathway is amino-acid biosynthesis; L-histidine biosynthesis; L-histidine from 5-phospho-alpha-D-ribose 1-diphosphate: step 4/9. The sequence is that of 1-(5-phosphoribosyl)-5-[(5-phosphoribosylamino)methylideneamino] imidazole-4-carboxamide isomerase from Blochmanniella floridana.